The following is a 255-amino-acid chain: Type III pantothenate kinase (255 aa).

6 to 13 contacts ATP; the sequence is DVGNTNTV. Residues tyrosine 100 and 107–110 contribute to the substrate site; that span reads GADR. The active-site Proton acceptor is aspartate 109. Aspartate 129 lines the K(+) pocket. Position 132 (threonine 132) interacts with ATP. Threonine 184 serves as a coordination point for substrate.

It belongs to the type III pantothenate kinase family. As to quaternary structure, homodimer. It depends on NH4(+) as a cofactor. K(+) is required as a cofactor.

The protein localises to the cytoplasm. The catalysed reaction is (R)-pantothenate + ATP = (R)-4'-phosphopantothenate + ADP + H(+). It functions in the pathway cofactor biosynthesis; coenzyme A biosynthesis; CoA from (R)-pantothenate: step 1/5. Catalyzes the phosphorylation of pantothenate (Pan), the first step in CoA biosynthesis. The chain is Type III pantothenate kinase from Acetivibrio thermocellus (strain ATCC 27405 / DSM 1237 / JCM 9322 / NBRC 103400 / NCIMB 10682 / NRRL B-4536 / VPI 7372) (Clostridium thermocellum).